Here is a 159-residue protein sequence, read N- to C-terminus: Small ribosomal subunit protein uS4 (159 aa).

Residues 106–158 enclose the S4 RNA-binding domain; that stretch reads RRLQTIVYRMGLAKSIYHARQLIVHGHIAIEGRRVTSPGFLVPRELEDKITLV.

It belongs to the universal ribosomal protein uS4 family. Part of the 30S ribosomal subunit. Contacts protein S5. The interaction surface between S4 and S5 is involved in control of translational fidelity.

One of the primary rRNA binding proteins, it binds directly to 16S rRNA where it nucleates assembly of the body of the 30S subunit. Functionally, with S5 and S12 plays an important role in translational accuracy. The polypeptide is Small ribosomal subunit protein uS4 (Pyrobaculum arsenaticum (strain DSM 13514 / JCM 11321 / PZ6)).